The following is a 260-amino-acid chain: 3-methyl-2-oxobutanoate hydroxymethyltransferase (260 aa).

Residues D44 and D83 each contribute to the Mg(2+) site. Residues 44–45, D83, and K113 contribute to the 3-methyl-2-oxobutanoate site; that span reads DS. E115 serves as a coordination point for Mg(2+). E183 (proton acceptor) is an active-site residue.

Belongs to the PanB family. As to quaternary structure, homodecamer; pentamer of dimers. Mg(2+) serves as cofactor.

The protein localises to the cytoplasm. It carries out the reaction 3-methyl-2-oxobutanoate + (6R)-5,10-methylene-5,6,7,8-tetrahydrofolate + H2O = 2-dehydropantoate + (6S)-5,6,7,8-tetrahydrofolate. The protein operates within cofactor biosynthesis; (R)-pantothenate biosynthesis; (R)-pantoate from 3-methyl-2-oxobutanoate: step 1/2. Catalyzes the reversible reaction in which hydroxymethyl group from 5,10-methylenetetrahydrofolate is transferred onto alpha-ketoisovalerate to form ketopantoate. This chain is 3-methyl-2-oxobutanoate hydroxymethyltransferase, found in Gloeobacter violaceus (strain ATCC 29082 / PCC 7421).